We begin with the raw amino-acid sequence, 141 residues long: Hemoglobin subunit alpha-1/2 (141 aa).

A Globin domain is found at 1 to 141 (VLSPADKTNV…VSTVLTSKYR (141 aa)). Ser3 carries the post-translational modification Phosphoserine. The residue at position 7 (Lys7) is an N6-succinyllysine. Phosphothreonine is present on Thr8. Lys11 is subject to N6-succinyllysine. Residue Lys16 is modified to N6-acetyllysine; alternate. Lys16 is subject to N6-succinyllysine; alternate. Position 24 is a phosphotyrosine (Tyr24). Ser35 is subject to Phosphoserine. Lys40 carries the post-translational modification N6-succinyllysine. Ser49 carries the phosphoserine modification. His58 is an O2 binding site. His87 lines the heme b pocket. Position 102 is a phosphoserine (Ser102). A Phosphothreonine modification is found at Thr108. 2 positions are modified to phosphoserine: Ser124 and Ser131. Phosphothreonine is present on residues Thr134 and Thr137. The residue at position 138 (Ser138) is a Phosphoserine.

Belongs to the globin family. As to quaternary structure, heterotetramer of two alpha chains and two beta chains. As to expression, red blood cells.

Its function is as follows. Involved in oxygen transport from the lung to the various peripheral tissues. This is Hemoglobin subunit alpha-1/2 from Macaca sinica (Toque macaque).